A 417-amino-acid polypeptide reads, in one-letter code: Serine hydroxymethyltransferase (417 aa).

At lysine 54 the chain carries N6-acetyllysine. Residues leucine 121 and 125-127 each bind (6S)-5,6,7,8-tetrahydrofolate; that span reads GHL. Lysine 229 carries the post-translational modification N6-(pyridoxal phosphate)lysine. 3 positions are modified to N6-acetyllysine: lysine 250, lysine 285, and lysine 354. Position 355 to 357 (355 to 357) interacts with (6S)-5,6,7,8-tetrahydrofolate; it reads SPF. N6-acetyllysine is present on lysine 375.

It belongs to the SHMT family. In terms of assembly, homodimer. Pyridoxal 5'-phosphate serves as cofactor.

The protein resides in the cytoplasm. It catalyses the reaction (6R)-5,10-methylene-5,6,7,8-tetrahydrofolate + glycine + H2O = (6S)-5,6,7,8-tetrahydrofolate + L-serine. It participates in one-carbon metabolism; tetrahydrofolate interconversion. The protein operates within amino-acid biosynthesis; glycine biosynthesis; glycine from L-serine: step 1/1. Its function is as follows. Catalyzes the reversible interconversion of serine and glycine with tetrahydrofolate (THF) serving as the one-carbon carrier. This reaction serves as the major source of one-carbon groups required for the biosynthesis of purines, thymidylate, methionine, and other important biomolecules. Also exhibits THF-independent aldolase activity toward beta-hydroxyamino acids, producing glycine and aldehydes, via a retro-aldol mechanism. The chain is Serine hydroxymethyltransferase from Escherichia coli O1:K1 / APEC.